Here is a 209-residue protein sequence, read N- to C-terminus: Vacuolar protein sorting-associated protein 28 homolog 1 (209 aa).

Residues 1–99 (MEVKLWNDKR…TSGVPATVEH (99 aa)) enclose the VPS28 N-terminal domain. In terms of domain architecture, VPS28 C-terminal spans 109–205 (SSASVVAECV…SYNSFMAALP (97 aa)).

It belongs to the VPS28 family. In terms of assembly, component of the endosomal sorting required for transport complex I (ESCRT-I), composed of ELC, VPS28 and VPS37. Interacts with ELC.

The protein resides in the endosome. Functionally, component of the ESCRT-I complex (endosomal sorting complex required for transport I), a regulator of vesicular trafficking process. Required for the sorting of endocytic ubiquitinated cargos into multivesicular bodies (MVBs). Mediates the association to the ESCRT-0 complex. The protein is Vacuolar protein sorting-associated protein 28 homolog 1 (VPS28-1) of Arabidopsis thaliana (Mouse-ear cress).